Consider the following 100-residue polypeptide: uncharacterized protein (100 aa).

The next 3 membrane-spanning stretches (helical) occupy residues 7–28, 38–60, and 65–87; these read TLIG…LLSL, AQLS…ILII, and LSAL…ANGV.

The protein localises to the cell membrane. This is an uncharacterized protein from Archaeoglobus fulgidus (strain ATCC 49558 / DSM 4304 / JCM 9628 / NBRC 100126 / VC-16).